The sequence spans 303 residues: N-acetyl-D-glucosamine kinase (303 aa).

ATP-binding positions include 4-11 and 133-140; these read GFDIGGTK and GVGGGLIF. Residues His-157, Cys-177, Cys-179, and Cys-184 each contribute to the Zn(2+) site.

It belongs to the ROK (NagC/XylR) family. NagK subfamily.

It carries out the reaction N-acetyl-D-glucosamine + ATP = N-acetyl-D-glucosamine 6-phosphate + ADP + H(+). It functions in the pathway cell wall biogenesis; peptidoglycan recycling. Functionally, catalyzes the phosphorylation of N-acetyl-D-glucosamine (GlcNAc) derived from cell-wall degradation, yielding GlcNAc-6-P. The chain is N-acetyl-D-glucosamine kinase from Shigella sonnei (strain Ss046).